We begin with the raw amino-acid sequence, 631 residues long: Polyadenylate-binding protein 3 (631 aa).

4 RRM domains span residues Ala-11–Arg-89, Gly-99–Ser-175, Pro-191–Lys-268, and Val-294–Arg-370. Residue Tyr-140 is modified to Phosphotyrosine. Ser-315 carries the phosphoserine modification. At Lys-361 the chain carries N6,N6-dimethyllysine; alternate. A Glycyl lysine isopeptide (Lys-Gly) (interchain with G-Cter in SUMO2); alternate cross-link involves residue Lys-361. A Phosphotyrosine modification is found at Tyr-364. Arg-426, Arg-430, and Arg-449 each carry omega-N-methylarginine. At Arg-501 the chain carries Dimethylated arginine. Arg-513 is subject to Omega-N-methylarginine. The PABC domain maps to Gln-537–Ala-614.

The protein belongs to the polyadenylate-binding protein type-1 family. Testis specific.

It is found in the cytoplasm. In terms of biological role, binds the poly(A) tail of mRNA. May be involved in cytoplasmic regulatory processes of mRNA metabolism. Binds poly(A) with a slightly lower affinity as compared to PABPC1. This chain is Polyadenylate-binding protein 3 (PABPC3), found in Homo sapiens (Human).